A 75-amino-acid chain; its full sequence is Exodeoxyribonuclease 7 small subunit (75 aa).

This sequence belongs to the XseB family. As to quaternary structure, heterooligomer composed of large and small subunits.

It localises to the cytoplasm. It catalyses the reaction Exonucleolytic cleavage in either 5'- to 3'- or 3'- to 5'-direction to yield nucleoside 5'-phosphates.. Bidirectionally degrades single-stranded DNA into large acid-insoluble oligonucleotides, which are then degraded further into small acid-soluble oligonucleotides. The protein is Exodeoxyribonuclease 7 small subunit of Elusimicrobium minutum (strain Pei191).